The following is a 100-amino-acid chain: Urease subunit gamma (100 aa).

This sequence belongs to the urease gamma subunit family. Heterotrimer of UreA (gamma), UreB (beta) and UreC (alpha) subunits. Three heterotrimers associate to form the active enzyme.

The protein resides in the cytoplasm. It carries out the reaction urea + 2 H2O + H(+) = hydrogencarbonate + 2 NH4(+). Its pathway is nitrogen metabolism; urea degradation; CO(2) and NH(3) from urea (urease route): step 1/1. This is Urease subunit gamma from Variovorax paradoxus (strain S110).